A 113-amino-acid chain; its full sequence is Crustacean hyperglycemic hormones B (113 aa).

The N-terminal stretch at 1 to 26 is a signal peptide; it reads MVAFRMMSMALLVVVASSWWASPVEA. 3 cysteine pairs are disulfide-bonded: Cys46–Cys82, Cys62–Cys78, and Cys65–Cys91. Val111 is subject to Valine amide.

The protein belongs to the arthropod CHH/MIH/GIH/VIH hormone family. In terms of tissue distribution, expressed at a constant level in the eyestalks of juveniles and mature females. A low level expression is seen in the central nervous system.

It localises to the secreted. Its function is as follows. Hormone found in the sinus gland of isopods and decapods which controls the blood sugar level. Has a secretagogue action over the amylase released from the midgut gland. May act as a stress hormone and may be involved in the control of molting and reproduction. The sequence is that of Crustacean hyperglycemic hormones B from Metapenaeus ensis (Greasyback shrimp).